Here is a 160-residue protein sequence, read N- to C-terminus: Prorelaxin (160 aa).

3 disulfide bridges follow: cysteine 10/cysteine 147, cysteine 22/cysteine 160, and cysteine 146/cysteine 151. Positions 34–133 (QEKQRILGSG…KDFNLNIYSP (100 aa)) are cleaved as a propeptide — connecting peptide.

Belongs to the insulin family. As to quaternary structure, heterodimer of a B chain and an A chain linked by two disulfide bonds. Expressed in the endometrium during pregnancy and in mammary gland during lactation.

It localises to the secreted. Relaxin is an ovarian hormone that acts with estrogen to produce dilatation of the birth canal in many mammals. It bears mature young, and allows separation of the pelvic bones. This is Prorelaxin (RLN) from Cavia porcellus (Guinea pig).